Here is a 484-residue protein sequence, read N- to C-terminus: Major extracellular endoglucanase (484 aa).

The first 25 residues, 1-25 (MSIFRTASTLALATALALAAGPAFS), serve as a signal peptide directing secretion. The active-site Proton donor is Glu-182. Glu-303 acts as the Nucleophile in catalysis. Residues 370–402 (GTAGNTTPTPTPTPTPTPTPTPTPTPTPTPGTS) are disordered. Residues 375-399 (TTPTPTPTPTPTPTPTPTPTPTPTP) are thr-Pro repeats ('hinge') (Pro-Thr box). Pro residues predominate over residues 378-398 (TPTPTPTPTPTPTPTPTPTPT). The 90-residue stretch at 395 to 484 (PTPTPGTSTF…TAEFGFCAAS (90 aa)) folds into the CBM2 domain.

Belongs to the glycosyl hydrolase 5 (cellulase A) family.

The catalysed reaction is Endohydrolysis of (1-&gt;4)-beta-D-glucosidic linkages in cellulose, lichenin and cereal beta-D-glucans.. The polypeptide is Major extracellular endoglucanase (engXCA) (Xanthomonas campestris pv. campestris (strain ATCC 33913 / DSM 3586 / NCPPB 528 / LMG 568 / P 25)).